We begin with the raw amino-acid sequence, 83 residues long: Toxin To12 (83 aa).

Positions 1-19 (MKGLILFICGFMMIGVILA) are cleaved as a signal peptide. Residues 20-82 (KEGYPMDHEG…VWDYYNNKCG (63 aa)) enclose the LCN-type CS-alpha/beta domain. Intrachain disulfides connect Cys30–Cys81, Cys34–Cys57, Cys42–Cys62, and Cys46–Cys64. Cys81 is modified (cysteine amide).

It belongs to the long (4 C-C) scorpion toxin superfamily. Sodium channel inhibitor family. Beta subfamily. Expressed by the venom gland.

Its subcellular location is the secreted. Functionally, beta toxins bind voltage-independently at site-4 of sodium channels (Nav) and shift the voltage of activation toward more negative potentials thereby affecting sodium channel activation and promoting spontaneous and repetitive firing. The protein is Toxin To12 of Tityus obscurus (Amazonian scorpion).